Here is a 239-residue protein sequence, read N- to C-terminus: Phosphoribosylaminoimidazole-succinocarboxamide synthase (239 aa).

This sequence belongs to the SAICAR synthetase family.

It carries out the reaction 5-amino-1-(5-phospho-D-ribosyl)imidazole-4-carboxylate + L-aspartate + ATP = (2S)-2-[5-amino-1-(5-phospho-beta-D-ribosyl)imidazole-4-carboxamido]succinate + ADP + phosphate + 2 H(+). It participates in purine metabolism; IMP biosynthesis via de novo pathway; 5-amino-1-(5-phospho-D-ribosyl)imidazole-4-carboxamide from 5-amino-1-(5-phospho-D-ribosyl)imidazole-4-carboxylate: step 1/2. The chain is Phosphoribosylaminoimidazole-succinocarboxamide synthase from Campylobacter hominis (strain ATCC BAA-381 / DSM 21671 / CCUG 45161 / LMG 19568 / NCTC 13146 / CH001A).